Reading from the N-terminus, the 27-residue chain is Pregnancy-associated glycoprotein 55 (27 aa).

The protein belongs to the peptidase A1 family. Glycosylated. Placenta.

The chain is Pregnancy-associated glycoprotein 55 (PAG55) from Capra hircus (Goat).